The chain runs to 341 residues: S-adenosylmethionine:tRNA ribosyltransferase-isomerase (341 aa).

Belongs to the QueA family. As to quaternary structure, monomer.

Its subcellular location is the cytoplasm. It catalyses the reaction 7-aminomethyl-7-carbaguanosine(34) in tRNA + S-adenosyl-L-methionine = epoxyqueuosine(34) in tRNA + adenine + L-methionine + 2 H(+). It participates in tRNA modification; tRNA-queuosine biosynthesis. In terms of biological role, transfers and isomerizes the ribose moiety from AdoMet to the 7-aminomethyl group of 7-deazaguanine (preQ1-tRNA) to give epoxyqueuosine (oQ-tRNA). In Chlorobium phaeobacteroides (strain DSM 266 / SMG 266 / 2430), this protein is S-adenosylmethionine:tRNA ribosyltransferase-isomerase.